A 94-amino-acid polypeptide reads, in one-letter code: Nucleoid-associated protein MYPE8070 (94 aa).

It belongs to the YbaB/EbfC family. As to quaternary structure, homodimer.

It localises to the cytoplasm. The protein localises to the nucleoid. Binds to DNA and alters its conformation. May be involved in regulation of gene expression, nucleoid organization and DNA protection. The chain is Nucleoid-associated protein MYPE8070 from Malacoplasma penetrans (strain HF-2) (Mycoplasma penetrans).